We begin with the raw amino-acid sequence, 701 residues long: MLLPENMVRLQIISDKSAIDPIITKLLKLGMFQPEDPLYPLGNERIEDARRLITAVQDHVSKLKIIMELGGLVIEPLGSIKVSSWIKAAQDVSEEASKLEERYKELLEEIGRLRSEKDLYQQQLKELEPIKSITVELSKLYSLELFDVILAQVDEDKLRLINQIIGDSNFVYYTRFGEERYIVLIIAEKNINVDKKLREAGVRRYELQEGKSPFQLYNEILERINQINIILERTREELAKKVKTEENYIKNVYGKLLTVRDALNIMNKARVSEYYLQIEGYFPEKHVKKVQNEINNLAFMDYIRPRRYGEKEEPPTLVELPKSIKVLESLVEIYGSPSYWEISPIVFLVFTFPILFGLMFPDFGNALVLLLFSIWFYRYGKKRGSENIPKLSIILIYSSIVAIITGLLARDFFGPLPVGGLREILNNGNYSAGPLYNLWPIPASVSEAIKFLLPFGEYSTSVSIENTMIFSVLLGALALFVSSLLGVIDAIRKKDPEFLFLEKLPLFLLYVVPIFIFMYGITDPANFFTVDQQILGQILNAVLMKSFSENIVGYGIVWWTSFALLYNWAAHAILVKRHDNATWGSAIAMGFIEGGFEGALLLLSNTISFIRVLVFALSHYYILYAFSYMAYLVAPSTTTIGVLINPIAIIILIIGNLLAIGLEGLVVFIQDLRLHFYEMFSKFYEGRGRKFEPVMAYVSLE.

The next 10 membrane-spanning stretches (helical) occupy residues 340 to 360 (WEIS…GLMF), 363 to 379 (FGNA…FYRY), 388 to 408 (IPKL…TGLL), 435 to 455 (LYNL…LLPF), 468 to 488 (MIFS…LGVI), 498 to 518 (FLFL…FIFM), 555 to 575 (GIVW…AILV), 583 to 603 (WGSA…LLLL), 612 to 632 (VLVF…MAYL), and 649 to 669 (IIIL…VVFI).

The protein belongs to the V-ATPase 116 kDa subunit family. As to quaternary structure, has multiple subunits with at least A(3), B(3), C, D, E, F, H, I and proteolipid K(x).

The protein localises to the cell membrane. Its function is as follows. Component of the A-type ATP synthase that produces ATP from ADP in the presence of a proton gradient across the membrane. The protein is A-type ATP synthase subunit I of Saccharolobus solfataricus (strain ATCC 35092 / DSM 1617 / JCM 11322 / P2) (Sulfolobus solfataricus).